The chain runs to 513 residues: Probable cytosol aminopeptidase (513 aa).

Positions 277 and 282 each coordinate Mn(2+). The active site involves Lys289. Residues Asp300, Asp359, and Glu361 each coordinate Mn(2+). Arg363 is a catalytic residue.

The protein belongs to the peptidase M17 family. Mn(2+) serves as cofactor.

The protein resides in the cytoplasm. The catalysed reaction is Release of an N-terminal amino acid, Xaa-|-Yaa-, in which Xaa is preferably Leu, but may be other amino acids including Pro although not Arg or Lys, and Yaa may be Pro. Amino acid amides and methyl esters are also readily hydrolyzed, but rates on arylamides are exceedingly low.. The enzyme catalyses Release of an N-terminal amino acid, preferentially leucine, but not glutamic or aspartic acids.. Presumably involved in the processing and regular turnover of intracellular proteins. Catalyzes the removal of unsubstituted N-terminal amino acids from various peptides. The chain is Probable cytosol aminopeptidase from Mycobacterium sp. (strain JLS).